Consider the following 243-residue polypeptide: Zinc import ATP-binding protein ZnuC 2 (243 aa).

The ABC transporter domain occupies 3 to 218; that stretch reads LSLHQLSVKF…PEYKVLFGLD (216 aa). Position 35 to 42 (35 to 42) interacts with ATP; that stretch reads GPNGSGKS.

This sequence belongs to the ABC transporter superfamily. Zinc importer (TC 3.A.1.15.5) family. In terms of assembly, the complex is composed of two ATP-binding proteins (ZnuC), two transmembrane proteins (ZnuB) and a solute-binding protein (ZnuA).

It localises to the cell inner membrane. The catalysed reaction is Zn(2+)(out) + ATP(in) + H2O(in) = Zn(2+)(in) + ADP(in) + phosphate(in) + H(+)(in). Part of the ABC transporter complex ZnuABC involved in zinc import. Responsible for energy coupling to the transport system. In Aliivibrio fischeri (strain ATCC 700601 / ES114) (Vibrio fischeri), this protein is Zinc import ATP-binding protein ZnuC 2.